Here is a 191-residue protein sequence, read N- to C-terminus: FMN-dependent NADH:quinone oxidoreductase 1 (191 aa).

FMN contacts are provided by residues serine 10 and 16-18 (SVS).

Belongs to the azoreductase type 1 family. As to quaternary structure, homodimer. FMN is required as a cofactor.

It carries out the reaction 2 a quinone + NADH + H(+) = 2 a 1,4-benzosemiquinone + NAD(+). It catalyses the reaction N,N-dimethyl-1,4-phenylenediamine + anthranilate + 2 NAD(+) = 2-(4-dimethylaminophenyl)diazenylbenzoate + 2 NADH + 2 H(+). Quinone reductase that provides resistance to thiol-specific stress caused by electrophilic quinones. In terms of biological role, also exhibits azoreductase activity. Catalyzes the reductive cleavage of the azo bond in aromatic azo compounds to the corresponding amines. This is FMN-dependent NADH:quinone oxidoreductase 1 from Jannaschia sp. (strain CCS1).